The following is a 111-amino-acid chain: Cornifelin (111 aa).

The protein belongs to the cornifelin family. In terms of assembly, directly or indirectly cross-linked to CE proteins loricin and involucrin (IVL).

It localises to the cytoplasm. Its function is as follows. Part of the insoluble cornified cell envelope (CE) of stratified squamous epithelia. The polypeptide is Cornifelin (CNFN) (Bos taurus (Bovine)).